Here is an 881-residue protein sequence, read N- to C-terminus: Beta-mannosidase (881 aa).

The first 18 residues, 1–18, serve as a signal peptide directing secretion; sequence MHLHLLFLLALCGAGCMA. Asn-35, Asn-77, Asn-89, and Asn-113 each carry an N-linked (GlcNAc...) asparagine glycan. An intrachain disulfide couples Cys-167 to Cys-176. 190-192 is a binding site for substrate; that stretch reads WDW. N-linked (GlcNAc...) asparagine glycans are attached at residues Asn-226, Asn-297, and Asn-302. Asn-456 contacts substrate. Glu-457 acts as the Proton donor in catalysis. Intrachain disulfides connect Cys-540–Cys-629, Cys-732–Cys-761, and Cys-764–Cys-769. Catalysis depends on Glu-554, which acts as the Nucleophile. Asn-803 carries an N-linked (GlcNAc...) asparagine glycan.

The protein belongs to the glycosyl hydrolase 2 family. As to quaternary structure, monomer.

The protein localises to the lysosome. The catalysed reaction is Hydrolysis of terminal, non-reducing beta-D-mannose residues in beta-D-mannosides.. Its pathway is glycan metabolism; N-glycan degradation. Its function is as follows. Exoglycosidase that cleaves the single beta-linked mannose residue from the non-reducing end of all N-linked glycoprotein oligosaccharides. This is Beta-mannosidase from Rattus norvegicus (Rat).